We begin with the raw amino-acid sequence, 284 residues long: uncharacterized protein (284 aa).

Residues 1-23 form the signal peptide; sequence MKRGCAIAVMICGLITSVSAASA.

Belongs to the surface antigen msp4 family.

This is an uncharacterized protein from Brucella abortus (strain 2308).